The chain runs to 376 residues: Erythronate-4-phosphate dehydrogenase (376 aa).

The substrate site is built by S45 and T67. D147 provides a ligand contact to NAD(+). R209 is a catalytic residue. An NAD(+)-binding site is contributed by D233. E238 is an active-site residue. The active-site Proton donor is the H255. G258 serves as a coordination point for NAD(+). Y259 provides a ligand contact to substrate.

Belongs to the D-isomer specific 2-hydroxyacid dehydrogenase family. PdxB subfamily. As to quaternary structure, homodimer.

Its subcellular location is the cytoplasm. The catalysed reaction is 4-phospho-D-erythronate + NAD(+) = (R)-3-hydroxy-2-oxo-4-phosphooxybutanoate + NADH + H(+). Its pathway is cofactor biosynthesis; pyridoxine 5'-phosphate biosynthesis; pyridoxine 5'-phosphate from D-erythrose 4-phosphate: step 2/5. In terms of biological role, catalyzes the oxidation of erythronate-4-phosphate to 3-hydroxy-2-oxo-4-phosphonooxybutanoate. The sequence is that of Erythronate-4-phosphate dehydrogenase from Shewanella halifaxensis (strain HAW-EB4).